A 36-amino-acid chain; its full sequence is Kappa-theraphotoxin-Aa1a (36 aa).

3 cysteine pairs are disulfide-bonded: C3–C18, C10–C23, and C17–C30. At I36 the chain carries Isoleucine amide.

Belongs to the neurotoxin 10 (Hwtx-1) family. In terms of tissue distribution, expressed by the venom gland.

It localises to the secreted. Selective inhibitor of voltage-gated potassium channel Kv10.1/KCNH1/EAG1 (IC(50)=637 nM). It acts by shifting the voltage dependence of channel activation in a depolarising direction. It shows a 100% inhibition at saturating concentrations, shows fast on-rates and is reversible. It also slightly affects channel inactivation, when the membrane is highly depolarised (&gt;+80 mV). The sequence is that of Kappa-theraphotoxin-Aa1a from Avicularia aurantiaca (Yellow-banded pinktoe tarantula).